A 301-amino-acid polypeptide reads, in one-letter code: uncharacterized protein (301 aa).

Residues Ser-44 and Tyr-107 each act as charge relay system in the active site. The Proton donor role is filled by Tyr-133. Lys-162 serves as the catalytic Schiff-base intermediate with substrate.

This sequence belongs to the DapA family. Homotetramer.

It is found in the cytoplasm. This is an uncharacterized protein from Pyrobaculum islandicum (strain DSM 4184 / JCM 9189 / GEO3).